Reading from the N-terminus, the 430-residue chain is UDP-N-acetylglucosamine 1-carboxyvinyltransferase 1 (430 aa).

Phosphoenolpyruvate is bound at residue 22-23 (KN). R102 is a binding site for UDP-N-acetyl-alpha-D-glucosamine. Residue C126 is the Proton donor of the active site. The residue at position 126 (C126) is a 2-(S-cysteinyl)pyruvic acid O-phosphothioketal. UDP-N-acetyl-alpha-D-glucosamine is bound by residues 131 to 135 (RPVDL), 172 to 175 (KVSV), D317, and I339.

This sequence belongs to the EPSP synthase family. MurA subfamily.

The protein resides in the cytoplasm. The catalysed reaction is phosphoenolpyruvate + UDP-N-acetyl-alpha-D-glucosamine = UDP-N-acetyl-3-O-(1-carboxyvinyl)-alpha-D-glucosamine + phosphate. It functions in the pathway cell wall biogenesis; peptidoglycan biosynthesis. Cell wall formation. Adds enolpyruvyl to UDP-N-acetylglucosamine. In Mesorhizobium japonicum (strain LMG 29417 / CECT 9101 / MAFF 303099) (Mesorhizobium loti (strain MAFF 303099)), this protein is UDP-N-acetylglucosamine 1-carboxyvinyltransferase 1.